The sequence spans 44 residues: Photosystem I reaction center subunit IX (44 aa).

The chain crosses the membrane as a helical span at residues 9-29 (FMRSAPIVAAIWISLTAGIII).

It belongs to the PsaJ family.

The protein resides in the cellular thylakoid membrane. May help in the organization of the PsaE and PsaF subunits. The polypeptide is Photosystem I reaction center subunit IX (Prochlorococcus marinus (strain MIT 9515)).